Here is a 324-residue protein sequence, read N- to C-terminus: MITTLITHVLNPLAYIVPVLLAVAFLTLLERKVLGYMQLRKGPNIVGPYGLLQPIADGLKLFIKEPVRPSTSSPFLFLATPMLALTLALTLWAPMPIPYPVTDLNLGVLFVLALSSLAVYSILGSGWASNSKYALIGALRAVAQTISYEVSLGLILLSVIIFTGGFTLQTFNIAQESIWLVVPAWPLAALWYISTLAETNRAPFDFTEGESELVSGFNVEYAGGPFALFFLAEYANILLMNTLSAILFLGATHIPALPELTAMNLMTKAALLSVVFLWVRASYPRFRYDQLMHLVWKSFLPMTLALVLWHLALPIALAGLPPQI.

A run of 8 helical transmembrane segments spans residues 9–29 (VLNP…LTLL), 75–95 (FLFL…WAPM), 106–126 (LGVL…LGSG), 146–166 (ISYE…TGGF), 177–197 (SIWL…STLA), 237–257 (ILLM…IPAL), 259–279 (ELTA…FLWV), and 299–319 (FLPM…ALAG).

Belongs to the complex I subunit 1 family.

The protein localises to the mitochondrion inner membrane. It catalyses the reaction a ubiquinone + NADH + 5 H(+)(in) = a ubiquinol + NAD(+) + 4 H(+)(out). Core subunit of the mitochondrial membrane respiratory chain NADH dehydrogenase (Complex I) that is believed to belong to the minimal assembly required for catalysis. Complex I functions in the transfer of electrons from NADH to the respiratory chain. The immediate electron acceptor for the enzyme is believed to be ubiquinone. This is NADH-ubiquinone oxidoreductase chain 1 (MT-ND1) from Thymallus arcticus (Arctic grayling).